A 928-amino-acid polypeptide reads, in one-letter code: MENINIEYGIDSNLNLDKFQDNEMEIKNLSKSFDNNNNNNSNTNNIKNNNRERSRRKSLSMPLLEPLPKPKRPPVPPRAFLMNDGADEKITNYIPTTPPSINITFEKKEDGDNYDDNYDDNYSGEDIKTSTTPPQFNSPEFNKNKPLPPIPIDQEKEDYHTMAPKPLPRVPSKIETFNDQNNNEGLQNSTSPLSSSPPPLGNLLNTSNGWRSANKPIDSSFSNIAPKRSTTLFDVTNPTIFPSSLNSSGSCCSSSGSGGKSPSNFLNFEPSKPNFENFDDYVFGNDSSELSQSQISPVVRTRRQRVFTRKAATMKLLDNGVDTDDENESELSKKSGTTLDSEPNLKSVSSSNRGSFVISKSSYNLRGSCSDEDDQENQTTNKNNSNNNNNNTTTNNNNNNNNNNNNNKDTLKVTETKHGRTVSLPEEPVSTLIPNATVSKKRPSLFNKFDFKSVIFEKIEEQQQKFESIPSRRSQLPYINDSTIFNKVVKEIIETEADYLDHMEITINFYLFAALEMVKYKILEKRDIFSIFSNFEEVYHISLKIYPMLLNCIPLLEKNQYPNIEEVFLFNSKSFQRYGSYLSSHDSCNKFLQEILLTNQTAAQIFQKLIPICKLNNLHSFLIKPCQRLCKYPLLLKELSKALPKEDEQNHKTIKRTTSLMGKIVSDINGKMKNDTKIQEIIKEIGTKDIEYLLHHQTFIGEGKVKKVNKNGSTSEGTLYLFNQRIVFAEKNSLFNKKATVISLSNISRVCDYDYRYPSGFAIYHNSKKVSTSSSSNLGTLSLGALIIISDEKLKWMNKIEDQIVSERVLAGTYTYVTNHFESFKNLENCSFSQSDSQSDFVDHDIQQEQQEQQQQQQEEEQTRVKIPQIVEPLSQQHDQPKLDHQQSSIQPKLSFPHLKQPKQDEKPIKKPKSPKHKNTEPENFSFY.

Low complexity predominate over residues 30 to 48 (SKSFDNNNNNNSNTNNIKN). Disordered stretches follow at residues 30–76 (SKSF…PPVP), 90–201 (ITNY…PPLG), and 318–410 (DNGV…NKDT). The segment covering 93–103 (YIPTTPPSINI) has biased composition (polar residues). The segment covering 112–123 (DNYDDNYDDNYS) has biased composition (acidic residues). 3 stretches are compositionally biased toward polar residues: residues 129 to 141 (TSTT…SPEF), 175 to 187 (ETFN…EGLQ), and 334 to 367 (KSGT…NLRG). A compositionally biased stretch (low complexity) spans 377 to 407 (NQTTNKNNSNNNNNNTTTNNNNNNNNNNNNN). The region spanning 484–671 (IFNKVVKEII…GKIVSDINGK (188 aa)) is the DH domain. A PH-like region spans residues 699-807 (FIGEGKVKKV…NKIEDQIVSE (109 aa)). Positions 835 to 928 (SDSQSDFVDH…NTEPENFSFY (94 aa)) are disordered. Low complexity predominate over residues 848-857 (QEQQEQQQQQ).

Its function is as follows. GTPase-activating protein. This is RhoGEF domain-containing protein gxcH (gxcH) from Dictyostelium discoideum (Social amoeba).